The primary structure comprises 508 residues: Monocarboxylate transporter 9 (508 aa).

The next 6 membrane-spanning stretches (helical) occupy residues 13–33 (WVIV…PLAV), 53–73 (WVGS…SLFV), 80–100 (PVTI…SLAP), 102–122 (IYFL…LLYT), 137–157 (GLAL…YAAL), and 164–184 (FYGL…ILAC). The disordered stretch occupies residues 242-263 (GDWGRETSLPKNPTGAAHTKEP). 6 helical membrane-spanning segments follow: residues 303–323 (VFSA…PPSL), 341–361 (IPLI…LGIL), 370–390 (LYLY…IPLA), 396–416 (LAIL…FPYV), 431–451 (GILM…VGWF), and 460–480 (IAFY…LLAI).

It belongs to the major facilitator superfamily. Monocarboxylate porter (TC 2.A.1.13) family. Expressed in the liver and kidneys. In the liver localizes on the sinusoidal membrane of the hepatocytes.

The protein resides in the cell membrane. The catalysed reaction is creatine(in) = creatine(out). It carries out the reaction (R)-carnitine(in) = (R)-carnitine(out). Its function is as follows. Extracellular pH-and Na(+)-sensitive low-affinity creatine transporter. Also functions as a pH-independent carnitine efflux transporter. This is Monocarboxylate transporter 9 (Slc16a9) from Rattus norvegicus (Rat).